We begin with the raw amino-acid sequence, 274 residues long: Diaminopimelate epimerase (274 aa).

Substrate-binding residues include Asn11, Gln44, and Asn64. The active-site Proton donor is the Cys73. Substrate-binding positions include 74–75, Asn157, Asn190, and 208–209; these read GN and ER. The Proton acceptor role is filled by Cys217. 218 to 219 provides a ligand contact to substrate; the sequence is GS.

This sequence belongs to the diaminopimelate epimerase family. As to quaternary structure, homodimer.

The protein resides in the cytoplasm. The catalysed reaction is (2S,6S)-2,6-diaminopimelate = meso-2,6-diaminopimelate. The protein operates within amino-acid biosynthesis; L-lysine biosynthesis via DAP pathway; DL-2,6-diaminopimelate from LL-2,6-diaminopimelate: step 1/1. Catalyzes the stereoinversion of LL-2,6-diaminopimelate (L,L-DAP) to meso-diaminopimelate (meso-DAP), a precursor of L-lysine and an essential component of the bacterial peptidoglycan. The sequence is that of Diaminopimelate epimerase from Salmonella agona (strain SL483).